The following is a 449-amino-acid chain: Exodeoxyribonuclease 7 large subunit (449 aa).

This sequence belongs to the XseA family. As to quaternary structure, heterooligomer composed of large and small subunits.

Its subcellular location is the cytoplasm. The enzyme catalyses Exonucleolytic cleavage in either 5'- to 3'- or 3'- to 5'-direction to yield nucleoside 5'-phosphates.. In terms of biological role, bidirectionally degrades single-stranded DNA into large acid-insoluble oligonucleotides, which are then degraded further into small acid-soluble oligonucleotides. The protein is Exodeoxyribonuclease 7 large subunit of Lacticaseibacillus casei (strain BL23) (Lactobacillus casei).